A 469-amino-acid polypeptide reads, in one-letter code: L-seryl-tRNA(Sec) selenium transferase (469 aa).

K298 carries the post-translational modification N6-(pyridoxal phosphate)lysine.

It belongs to the SelA family. The cofactor is pyridoxal 5'-phosphate.

It is found in the cytoplasm. The catalysed reaction is L-seryl-tRNA(Sec) + selenophosphate + H(+) = L-selenocysteinyl-tRNA(Sec) + phosphate. The protein operates within aminoacyl-tRNA biosynthesis; selenocysteinyl-tRNA(Sec) biosynthesis; selenocysteinyl-tRNA(Sec) from L-seryl-tRNA(Sec) (bacterial route): step 1/1. Converts seryl-tRNA(Sec) to selenocysteinyl-tRNA(Sec) required for selenoprotein biosynthesis. The protein is L-seryl-tRNA(Sec) selenium transferase of Nitratidesulfovibrio vulgaris (strain ATCC 29579 / DSM 644 / CCUG 34227 / NCIMB 8303 / VKM B-1760 / Hildenborough) (Desulfovibrio vulgaris).